A 515-amino-acid chain; its full sequence is Aldehyde dehydrogenase tropH (515 aa).

238–243 serves as a coordination point for NAD(+); the sequence is GSVATG. The active-site Proton acceptor is Glu260. Cys295 (nucleophile) is an active-site residue.

Belongs to the aldehyde dehydrogenase family.

It catalyses the reaction an aldehyde + NAD(+) + H2O = a carboxylate + NADH + 2 H(+). The protein operates within secondary metabolite biosynthesis. Functionally, aldehyde dehydrogenase; part of the gene cluster that mediates the biosynthesis of the tropolone class of fungal maleic anhydrides. The pathway begins with the synthesis of 3-methylorcinaldehyde by the non-reducing polyketide synthase (PKS) tropA. 3-methylorcinaldehyde is the substrate for the FAD-dependent monooxygenase tropB to yield a dearomatized hydroxycyclohexadione. The 2-oxoglutarate-dependent dioxygenase tropC then performs the oxidative ring expansion to provide the first tropolone metabolite stipitaldehyde. Trop D converts stipitaldehyde into stipitacetal which is in turn converted to stipitalide by the short-chain dehydrogenase/reductase tropE. The next steps involve tropF, tropG, tropH, tropI and tropJ to form successive tropolone maleic anhydrides including stipitaldehydic, stipitatonic and stipitatic acids. This chain is Aldehyde dehydrogenase tropH, found in Talaromyces stipitatus (strain ATCC 10500 / CBS 375.48 / QM 6759 / NRRL 1006) (Penicillium stipitatum).